A 331-amino-acid polypeptide reads, in one-letter code: UPF0324 membrane protein SA0329 (331 aa).

11 helical membrane-spanning segments follow: residues 9-26, 31-48, 69-88, 93-115, 122-144, 154-176, 183-202, 217-234, 247-269, 273-295, and 308-330; these read FMIG…SFLA, ILDK…AILY, LLRF…DIIG, LLAI…NKLL, ALLL…APIF, SIGI…YAIF, YGAW…LAGG, LGRV…ILIM, ISIP…VTIP, LNIL…GLNV, and LMTI…HWLY.

The protein belongs to the UPF0324 family.

The protein localises to the cell membrane. This is UPF0324 membrane protein SA0329 from Staphylococcus aureus (strain N315).